A 284-amino-acid polypeptide reads, in one-letter code: Nucleotide-binding protein Sbal223_0704 (284 aa).

Position 8 to 15 (8 to 15 (GRSGSGKS)) interacts with ATP. 56-59 (DVRN) is a GTP binding site.

This sequence belongs to the RapZ-like family.

In terms of biological role, displays ATPase and GTPase activities. This is Nucleotide-binding protein Sbal223_0704 from Shewanella baltica (strain OS223).